Here is a 68-residue protein sequence, read N- to C-terminus: Conotoxin Ar5.3 (68 aa).

The signal sequence occupies residues 1-19 (MLCLPVFIILLLLASPAAS). A propeptide spanning residues 20-53 (NPLEKRIQNDLIRAALEDADMENDPRSIIDSVKT) is cleaved from the precursor.

This sequence belongs to the conotoxin T superfamily. Contains 2 disulfide bonds that can be either 'C1-C3, C2-C4' or 'C1-C4, C2-C3', since these disulfide connectivities have been observed for conotoxins with cysteine framework V (for examples, see AC P0DQQ7 and AC P81755). In terms of tissue distribution, expressed by the venom duct.

Its subcellular location is the secreted. In Conus arenatus (Sand-dusted cone), this protein is Conotoxin Ar5.3.